Here is a 218-residue protein sequence, read N- to C-terminus: Sodium channel regulatory subunit beta-1 (218 aa).

An N-terminal signal peptide occupies residues 1–18; the sequence is MGRLLAFVVGAALVSSAW. The Extracellular portion of the chain corresponds to 19 to 157; it reads GGCVEVDSET…DKANRDMASI (139 aa). Intrachain disulfides connect Cys21–Cys43 and Cys40–Cys121. An Ig-like C2-type domain is found at 22–150; sequence VEVDSETEAV…KIHLEVVDKA (129 aa). Asn93, Asn110, Asn114, and Asn135 each carry an N-linked (GlcNAc...) asparagine glycan. A helical membrane pass occupies residues 158-179; sequence VSEIMMYVLIVVLTIWLVAEMV. The Cytoplasmic segment spans residues 180-218; sequence YCYKKIAAATEAAAQENASEYLAITSESKENCTGVQVAE.

Belongs to the sodium channel auxiliary subunit SCN1B (TC 8.A.17) family. In terms of assembly, a voltage-gated sodium (Nav) channel consists of an ion-conducting pore-forming alpha subunit functional on its own that is regulated by one or more beta subunits. Interacts with SCN1A; regulatory subunit of SCN1A/Nav1.1. Interacts with SCN3A; regulatory subunit of SCN3A/Nav1.3. Interacts with SCN4A; regulatory subunit of SCN4A/Nav1.4. Interacts with SCN5A; regulatory subunit of SCN5A/Nav1.5. Interacts with SCN8A; regulatory subunit of SCN8A/Nav1.6. Interacts with SCN9A; regulatory subunit of SCN9A/Nav1.7. Interacts with SCN10A; regulatory subunit of SCN10A/Nav1.8. Interacts with NFASC. Interacts with TMEM65.

Its subcellular location is the cell membrane. The protein resides in the perikaryon. It is found in the cell projection. The protein localises to the axon. Functionally, regulatory subunit of multiple voltage-gated sodium (Nav) channels directly mediating the depolarization of excitable membranes. Navs, also called VGSCs (voltage-gated sodium channels) or VDSCs (voltage-dependent sodium channels), operate by switching between closed and open conformations depending on the voltage difference across the membrane. In the open conformation they allow Na(+) ions to selectively pass through the pore, along their electrochemical gradient. The influx of Na+ ions provokes membrane depolarization, initiating the propagation of electrical signals throughout cells and tissues. The accessory beta subunits participate in localization and functional modulation of the Nav channels. Modulates the activity of SCN1A/Nav1.1, SCN2A/Nav1.2, SCN3A/Nav1.3, SCN4A/Nav1.4, SCN5A/Nav1.5, SCN8A/Nav1.6, SCN9A/Nav1.7 and SCN10A/Nav1.8. This chain is Sodium channel regulatory subunit beta-1, found in Oryctolagus cuniculus (Rabbit).